Here is an 82-residue protein sequence, read N- to C-terminus: Cytochrome b559 subunit alpha (82 aa).

Residues 21–35 (VIHSITVPALFIAGW) traverse the membrane as a helical segment. H23 contributes to the heme binding site.

Belongs to the PsbE/PsbF family. As to quaternary structure, heterodimer of an alpha subunit and a beta subunit. PSII is composed of 1 copy each of membrane proteins PsbA, PsbB, PsbC, PsbD, PsbE, PsbF, PsbH, PsbI, PsbJ, PsbK, PsbL, PsbM, PsbT, PsbX, PsbY, PsbZ, Psb30/Ycf12, at least 3 peripheral proteins of the oxygen-evolving complex and a large number of cofactors. It forms dimeric complexes. Requires heme b as cofactor.

The protein localises to the plastid. It is found in the chloroplast thylakoid membrane. In terms of biological role, this b-type cytochrome is tightly associated with the reaction center of photosystem II (PSII). PSII is a light-driven water:plastoquinone oxidoreductase that uses light energy to abstract electrons from H(2)O, generating O(2) and a proton gradient subsequently used for ATP formation. It consists of a core antenna complex that captures photons, and an electron transfer chain that converts photonic excitation into a charge separation. This is Cytochrome b559 subunit alpha from Chlamydomonas reinhardtii (Chlamydomonas smithii).